The following is a 104-amino-acid chain: UPF0145 protein cbdbA1711 (104 aa).

The protein belongs to the UPF0145 family.

This is UPF0145 protein cbdbA1711 from Dehalococcoides mccartyi (strain CBDB1).